The sequence spans 327 residues: Phospho-N-acetylmuramoyl-pentapeptide-transferase (327 aa).

The next 10 helical transmembrane spans lie at 3–23 (IALIAGIVTFILTIIGIPAFI), 51–71 (TMGGTVFLLTSVLASFVIGLF), 75–95 (LSNGLIMILFILVLYGVVGFL), 115–135 (LFLQLVGGVVFYFFYNQHGAG), 140–160 (IFTVPVQLGFLYVFFVLFWLI), 172–192 (IDGLASISVVISLVAYAVIAV), 197–217 (FDILIVIISMIGGLLGFFVFN), 223–243 (IFMGDVGSLALGGMLAAISIS), 248–268 (WTLLLIGIVYVFETTSVMMQV), and 306–326 (VDFFFWGIGIVGSLLTLAILY).

This sequence belongs to the glycosyltransferase 4 family. MraY subfamily. The cofactor is Mg(2+).

The protein localises to the cell membrane. The enzyme catalyses UDP-N-acetyl-alpha-D-muramoyl-L-alanyl-gamma-D-glutamyl-L-lysyl-D-alanyl-D-alanine + di-trans,octa-cis-undecaprenyl phosphate = Mur2Ac(oyl-L-Ala-gamma-D-Glu-L-Lys-D-Ala-D-Ala)-di-trans,octa-cis-undecaprenyl diphosphate + UMP. The protein operates within cell wall biogenesis; peptidoglycan biosynthesis. In terms of biological role, catalyzes the initial step of the lipid cycle reactions in the biosynthesis of the cell wall peptidoglycan: transfers peptidoglycan precursor phospho-MurNAc-pentapeptide from UDP-MurNAc-pentapeptide onto the lipid carrier undecaprenyl phosphate, yielding undecaprenyl-pyrophosphoryl-MurNAc-pentapeptide, known as lipid I. The protein is Phospho-N-acetylmuramoyl-pentapeptide-transferase of Streptococcus sanguinis (strain SK36).